A 155-amino-acid chain; its full sequence is Transcriptional repressor NrdR (155 aa).

The segment at 3–34 (CPFCHAEETKVVDSRLVADGAQVRRRRECLEC) is a zinc-finger region. An ATP-cone domain is found at 49 to 139 (PLIIKRDGRR…VYKRFKDVSD (91 aa)).

Belongs to the NrdR family. Requires Zn(2+) as cofactor.

In terms of biological role, negatively regulates transcription of bacterial ribonucleotide reductase nrd genes and operons by binding to NrdR-boxes. This is Transcriptional repressor NrdR from Legionella pneumophila (strain Paris).